We begin with the raw amino-acid sequence, 648 residues long: Transketolase (648 aa).

His-22 lines the substrate pocket. Thiamine diphosphate-binding positions include His-62 and 109–111 (GPL). Asp-150 provides a ligand contact to Mg(2+). 2 residues coordinate thiamine diphosphate: Gly-151 and Asn-180. The Mg(2+) site is built by Asn-180 and Val-182. Substrate is bound by residues His-252, Arg-345, and Ser-372. His-252 contacts thiamine diphosphate. The Proton donor role is filled by Glu-397. Thiamine diphosphate is bound at residue Phe-423. Residues His-447, Asp-455, and Arg-506 each contribute to the substrate site.

The protein belongs to the transketolase family. As to quaternary structure, homodimer. Requires Mg(2+) as cofactor. Ca(2+) is required as a cofactor. It depends on Mn(2+) as a cofactor. The cofactor is Co(2+). Thiamine diphosphate serves as cofactor.

It catalyses the reaction D-sedoheptulose 7-phosphate + D-glyceraldehyde 3-phosphate = aldehydo-D-ribose 5-phosphate + D-xylulose 5-phosphate. In terms of biological role, catalyzes the transfer of a two-carbon ketol group from a ketose donor to an aldose acceptor, via a covalent intermediate with the cofactor thiamine pyrophosphate. This Mycoplasma pneumoniae (strain ATCC 29342 / M129 / Subtype 1) (Mycoplasmoides pneumoniae) protein is Transketolase (tkt).